We begin with the raw amino-acid sequence, 202 residues long: Ras-related protein RABD2c (202 aa).

GTP contacts are provided by residues 15 to 23 (GDSGVGKSC), 33 to 40 (YLDSYIST), 63 to 67 (DTAGQ), 121 to 124 (NKCD), and 151 to 153 (SAK). The Effector region motif lies at 37-45 (YISTIGVDF). The segment at 174-202 (ASQPAGGSKPPTVQIRGQPVNQQSGCCSS) is disordered. Positions 192–202 (PVNQQSGCCSS) are enriched in polar residues. 2 S-geranylgeranyl cysteine lipidation sites follow: Cys199 and Cys200.

It belongs to the small GTPase superfamily. Rab family.

It localises to the cell membrane. The protein resides in the golgi apparatus. The protein localises to the trans-Golgi network membrane. It is found in the golgi apparatus membrane. Its function is as follows. Protein transport. Regulator of membrane traffic from the Golgi apparatus towards the endoplasmic reticulum (ER). The protein is Ras-related protein RABD2c (RABD2C) of Arabidopsis thaliana (Mouse-ear cress).